The following is a 367-amino-acid chain: Succinyl-diaminopimelate desuccinylase (367 aa).

A Zn(2+)-binding site is contributed by His-64. Asp-66 is an active-site residue. Residue Asp-95 coordinates Zn(2+). Catalysis depends on Glu-125, which acts as the Proton acceptor. Zn(2+) contacts are provided by Glu-126, Glu-154, and His-339.

It belongs to the peptidase M20A family. DapE subfamily. Homodimer. It depends on Zn(2+) as a cofactor. Requires Co(2+) as cofactor.

The catalysed reaction is N-succinyl-(2S,6S)-2,6-diaminopimelate + H2O = (2S,6S)-2,6-diaminopimelate + succinate. The protein operates within amino-acid biosynthesis; L-lysine biosynthesis via DAP pathway; LL-2,6-diaminopimelate from (S)-tetrahydrodipicolinate (succinylase route): step 3/3. Catalyzes the hydrolysis of N-succinyl-L,L-diaminopimelic acid (SDAP), forming succinate and LL-2,6-diaminopimelate (DAP), an intermediate involved in the bacterial biosynthesis of lysine and meso-diaminopimelic acid, an essential component of bacterial cell walls. This Sulfurovum sp. (strain NBC37-1) protein is Succinyl-diaminopimelate desuccinylase.